Here is a 384-residue protein sequence, read N- to C-terminus: 5-cytosine rRNA methyltransferase NSUN4 (384 aa).

The N-terminal 25 residues, 1–25 (MAALVVRGVRDMLKRADFATVPRRQ), are a transit peptide targeting the mitochondrion. 4 residues coordinate S-adenosyl-L-methionine: glycine 185, glycine 186, lysine 187, and aspartate 204. Serine 206 is modified (phosphoserine). S-adenosyl-L-methionine contacts are provided by arginine 209, aspartate 237, glycine 238, and aspartate 255. Cysteine 310 serves as the catalytic Nucleophile.

Belongs to the class I-like SAM-binding methyltransferase superfamily. RsmB/NOP family. Heterodimer with MTERFD2/MTERF4; this interaction seems to be required for NSUN4 recruitment to the mitochondrial large ribosomal subunit.

Its subcellular location is the mitochondrion. The catalysed reaction is a cytidine in rRNA + S-adenosyl-L-methionine = a 5-methylcytidine in rRNA + S-adenosyl-L-homocysteine + H(+). It catalyses the reaction a cytidine in mRNA + S-adenosyl-L-methionine = a 5-methylcytidine in mRNA + S-adenosyl-L-homocysteine + H(+). In terms of biological role, mitochondrial RNA cytosine C(5)-methyltransferase that methylates cytosine to 5-methylcytosine (m5C) in various RNAs, such as rRNAs, mRNAs and some long non-coding RNAs (lncRNAs). Involved in mitochondrial ribosome small subunit (SSU) maturation by catalyzing methylation of mitochondrial 12S rRNA; the function is independent of MTERFD2/MTERF4 and assembled mitochondrial ribosome large subunit (LSU). Targeted to LSU by MTERFD2/MTERF4 and probably is involved in a final step in ribosome biogenesis to ensure that SSU and LSU are assembled. In vitro can methylate 16S rRNA of the LSU; the methylation is enhanced by MTERFD/MTERF4. Also acts as a regulator of innate immunity by marking double-stranded mitochondrial RNAs(mt-dsRNAs) generated in response to stress: catalyzes m5C modification on mitochondrial RNAs, such as a mRNAs and lncRNAs, with a preference for the termini of light-strand lncRNAs, promoting their degradation and cytosolic release. Modified light-strand lncRNAs are then recognized by C1QBP reader and recruited to the mitochondrial degradosome complex, which promotes their degradation. In Bos taurus (Bovine), this protein is 5-cytosine rRNA methyltransferase NSUN4 (NSUN4).